The chain runs to 183 residues: MYKTWRLCRTHTVGGLCHDGSHRFVSTGGAKIGKKFENMNQIRDYLSRPVWSVHEYLGINTKEEKLEPPSAEAVKKLLRLSGLPLEGADIKEIQMRLAKQLSFINKLHNIPVEGEKHTKEYDARLVQRNTKQLNYTKLLEGISHQKQDAELGEVSGSWKATGLAAESKNAYFVVKEGLLKNRK.

It belongs to the GatF family. As to quaternary structure, subunit of the heterotrimeric GatFAB amidotransferase (AdT) complex, composed of A (HER2), B (PET112) and F (YGR102C) subunits.

The protein resides in the mitochondrion inner membrane. It catalyses the reaction L-glutamyl-tRNA(Gln) + L-glutamine + ATP + H2O = L-glutaminyl-tRNA(Gln) + L-glutamate + ADP + phosphate + H(+). Functionally, allows the formation of correctly charged Gln-tRNA(Gln) through the transamidation of misacylated Glu-tRNA(Gln) in the mitochondria. The reaction takes place in the presence of glutamine and ATP through an activated gamma-phospho-Glu-tRNA(Gln). Required for proper protein synthesis within the mitochondrion. The protein is Glutamyl-tRNA(Gln) amidotransferase subunit F, mitochondrial of Saccharomyces cerevisiae (strain ATCC 204508 / S288c) (Baker's yeast).